The chain runs to 476 residues: Sedoheptulokinase (476 aa).

Belongs to the FGGY kinase family.

Its subcellular location is the cytoplasm. It catalyses the reaction sedoheptulose + ATP = D-sedoheptulose 7-phosphate + ADP + H(+). In terms of biological role, acts as a modulator of macrophage activation through control of glucose metabolism. This chain is Sedoheptulokinase (Shpk), found in Mus musculus (Mouse).